A 183-amino-acid polypeptide reads, in one-letter code: Ubiquitin-conjugating enzyme E2-21 kDa (183 aa).

Residues 17–179 (TCMSRIVKEY…VKYFLAERER (163 aa)) form the UBC core domain. The active-site Glycyl thioester intermediate is the Cys-115.

It belongs to the ubiquitin-conjugating enzyme family.

The protein resides in the peroxisome. The enzyme catalyses S-ubiquitinyl-[E1 ubiquitin-activating enzyme]-L-cysteine + [E2 ubiquitin-conjugating enzyme]-L-cysteine = [E1 ubiquitin-activating enzyme]-L-cysteine + S-ubiquitinyl-[E2 ubiquitin-conjugating enzyme]-L-cysteine.. It functions in the pathway protein modification; protein ubiquitination. Its function is as follows. Catalyzes the covalent attachment of ubiquitin to other proteins. Essential for peroxisome biogenesis. Required for UBC4-independent ubiquitination of PEX5. The protein is Ubiquitin-conjugating enzyme E2-21 kDa (PEX4) of Saccharomyces cerevisiae (strain ATCC 204508 / S288c) (Baker's yeast).